The chain runs to 331 residues: Germ cell-specific gene 1-like protein (331 aa).

The Cytoplasmic segment spans residues 1 to 8 (MKTSRRGR). A helical membrane pass occupies residues 9-29 (ALLAVALNLLALLFATTAFLT). The Extracellular segment spans residues 30–132 (THWCQGTQRV…FIDLAPASEK (103 aa)). A helical transmembrane segment spans residues 133–153 (GVLWLSVVSEVLYILLLVVGF). Topologically, residues 154-173 (SLMCLELFHSSNVIDGLKLN) are cytoplasmic. The helical transmembrane segment at 174 to 194 (AFAAVFTVLSGLLGMVAHMMY) threads the bilayer. The Extracellular portion of the chain corresponds to 195 to 217 (TQVFQVTVSLGPEDWRPHSWDYG). A helical membrane pass occupies residues 218 to 238 (WSFCLAWGSFTCCMAASVTTL). Topologically, residues 239 to 331 (NSYTKTVIEF…RQCWVLGHWV (93 aa)) are cytoplasmic.

It belongs to the GSG1 family. Component of the inner core of AMPAR complex. AMPAR complex consists of an inner core made of 4 pore-forming GluA/GRIA proteins (GRIA1, GRIA2, GRIA3 and GRIA4) and 4 major auxiliary subunits arranged in a twofold symmetry. One of the two pairs of distinct binding sites is occupied either by CNIH2, CNIH3 or CACNG2, CACNG3. The other harbors CACNG2, CACNG3, CACNG4, CACNG8 or GSG1L. This inner core of AMPAR complex is complemented by outer core constituents binding directly to the GluA/GRIA proteins at sites distinct from the interaction sites of the inner core constituents. Outer core constituents include at least PRRT1, PRRT2, CKAMP44/SHISA9, FRRS1L and NRN1. The proteins of the inner and outer core serve as a platform for other, more peripherally associated AMPAR constituents. Alone or in combination, these auxiliary subunits control the gating and pharmacology of the AMPAR complex and profoundly impact their biogenesis and protein processing.

It is found in the cell membrane. The protein resides in the synapse. In terms of biological role, as a component of the inner core of AMPAR complex, modifies AMPA receptor (AMPAR) gating. The protein is Germ cell-specific gene 1-like protein (GSG1L) of Homo sapiens (Human).